We begin with the raw amino-acid sequence, 171 residues long: Deoxyuridine 5'-triphosphate nucleotidohydrolase (171 aa).

Mg(2+) is bound at residue glutamate 143.

This sequence belongs to the dUTPase family. Homotrimer. Mg(2+) serves as cofactor.

It carries out the reaction dUTP + H2O = dUMP + diphosphate + H(+). It functions in the pathway pyrimidine metabolism; dUMP biosynthesis; dUMP from dCTP (dUTP route): step 2/2. This enzyme is involved in nucleotide metabolism: it produces dUMP, the immediate precursor of thymidine nucleotides and it decreases the intracellular concentration of dUTP, preventing uracil incorporation into DNA. The protein is Deoxyuridine 5'-triphosphate nucleotidohydrolase (DUT) of Oryza sativa subsp. japonica (Rice).